The sequence spans 374 residues: tRNA-specific 2-thiouridylase MnmA (374 aa).

Residues 16 to 23 (GMSGGVDS) and Met42 contribute to the ATP site. The tract at residues 102–104 (NPD) is interaction with target base in tRNA. The active-site Nucleophile is the Cys107. A disulfide bridge connects residues Cys107 and Cys203. Gly131 contributes to the ATP binding site. Residues 153-155 (KDQ) form an interaction with tRNA region. The Cysteine persulfide intermediate role is filled by Cys203. The tract at residues 311-312 (RY) is interaction with tRNA.

This sequence belongs to the MnmA/TRMU family.

Its subcellular location is the cytoplasm. The catalysed reaction is S-sulfanyl-L-cysteinyl-[protein] + uridine(34) in tRNA + AH2 + ATP = 2-thiouridine(34) in tRNA + L-cysteinyl-[protein] + A + AMP + diphosphate + H(+). In terms of biological role, catalyzes the 2-thiolation of uridine at the wobble position (U34) of tRNA, leading to the formation of s(2)U34. This Exiguobacterium sibiricum (strain DSM 17290 / CCUG 55495 / CIP 109462 / JCM 13490 / 255-15) protein is tRNA-specific 2-thiouridylase MnmA.